The following is a 647-amino-acid chain: Epithelial sodium channel subunit beta (647 aa).

The Cytoplasmic portion of the chain corresponds to 1-57 (MIHGKMKRLKRYFTRALHRIQKGPGYTYKELLVWFCDNTNTHGPKRIIKEGPKKRVM). The chain crosses the membrane as a helical span at residues 58 to 78 (WFILTLVFAGLVFWQWGVLIL). At 79–552 (TYLSYGVSVS…GGQFGFWMGG (474 aa)) the chain is on the extracellular side. 8 disulfides stabilise this stretch: Cys104/Cys291, Cys215/Cys222, Cys268/Cys275, Cys381/Cys468, Cys406/Cys464, Cys410/Cys460, Cys419/Cys446, and Cys421/Cys435. A helical transmembrane segment spans residues 553–573 (SVLCIIEFGEIIIDCMWITIL). Topologically, residues 574 to 647 (KFLAWSRNRR…AEPVSSDEEN (74 aa)) are cytoplasmic. The disordered stretch occupies residues 586 to 647 (RKRPQYSDPP…AEPVSSDEEN (62 aa)).

This sequence belongs to the amiloride-sensitive sodium channel (TC 1.A.6) family. SCNN1B subfamily. Component of the heterotrimeric epithelial sodium channel (ENaC) composed of an alpha/SCNN1A, a beta/SCNN1B and a gamma/SCNN1G subunit.

The protein localises to the apical cell membrane. It is found in the cytoplasmic vesicle membrane. It carries out the reaction Na(+)(in) = Na(+)(out). Originally identified and characterized by its inhibition by the diuretic drug amiloride. This is one of the three pore-forming subunits of the heterotrimeric epithelial sodium channel (ENaC), a critical regulator of sodium balance and fluid homeostasis. ENaC operates in epithelial tissues, where it mediates the electrodiffusion of sodium ions from extracellular fluid through the apical membrane of cells, with water following osmotically. The sequence is that of Epithelial sodium channel subunit beta (scnn1b-a) from Xenopus laevis (African clawed frog).